The sequence spans 294 residues: Syntaxin-19 (294 aa).

Positions 209 to 271 (LSEIEQRHKE…NNTKEKFGLA (63 aa)) constitute a t-SNARE coiled-coil homology domain.

It belongs to the syntaxin family. Interacts with EGFR.

Its subcellular location is the cell membrane. The protein resides in the cytoplasm. Functionally, plays a role in endosomal trafficking of the epidermal growth factor receptor (EGFR). The polypeptide is Syntaxin-19 (STX19) (Homo sapiens (Human)).